The following is a 185-amino-acid chain: Large ribosomal subunit protein uL5c (185 aa).

Belongs to the universal ribosomal protein uL5 family. As to quaternary structure, part of the 50S ribosomal subunit; contacts the 5S rRNA.

The protein resides in the plastid. Its subcellular location is the chloroplast. Binds 5S rRNA, forms part of the central protuberance of the 50S subunit. This Chlorokybus atmophyticus (Soil alga) protein is Large ribosomal subunit protein uL5c (rpl5).